The primary structure comprises 380 residues: Cytochrome b (380 aa).

4 helical membrane passes run 34–54, 78–99, 114–134, and 179–199; these read FGSL…LLAM, WLIR…YLHI, WNTG…GYVL, and FFAL…IHLT. His84 and His98 together coordinate heme b. Positions 183 and 197 each coordinate heme b. His202 is an a ubiquinone binding site. A run of 4 helical transmembrane segments spans residues 227 to 247, 289 to 309, 321 to 341, and 348 to 368; these read TKDI…ALFS, LGGV…PLLH, LSQL…WIGS, and FIII…ILFP.

This sequence belongs to the cytochrome b family. The cytochrome bc1 complex contains 11 subunits: 3 respiratory subunits (MT-CYB, CYC1 and UQCRFS1), 2 core proteins (UQCRC1 and UQCRC2) and 6 low-molecular weight proteins (UQCRH/QCR6, UQCRB/QCR7, UQCRQ/QCR8, UQCR10/QCR9, UQCR11/QCR10 and a cleavage product of UQCRFS1). This cytochrome bc1 complex then forms a dimer. It depends on heme b as a cofactor.

It is found in the mitochondrion inner membrane. Functionally, component of the ubiquinol-cytochrome c reductase complex (complex III or cytochrome b-c1 complex) that is part of the mitochondrial respiratory chain. The b-c1 complex mediates electron transfer from ubiquinol to cytochrome c. Contributes to the generation of a proton gradient across the mitochondrial membrane that is then used for ATP synthesis. This Pygoscelis antarcticus (Chinstrap penguin) protein is Cytochrome b (MT-CYB).